The following is a 375-amino-acid chain: S-(hydroxymethyl)glutathione dehydrogenase (375 aa).

Cysteine 40 contributes to the Zn(2+) binding site. Histidine 41 is a binding site for NAD(+). Zn(2+)-binding residues include histidine 62, glutamate 63, cysteine 92, cysteine 95, cysteine 98, cysteine 106, and cysteine 170. Residues 195–200 (GLGGIG), aspartate 219, 293–295 (IGV), and 318–320 (TAF) contribute to the NAD(+) site.

This sequence belongs to the zinc-containing alcohol dehydrogenase family. Class-III subfamily. In terms of assembly, homotetramer. Zn(2+) is required as a cofactor.

The enzyme catalyses a primary alcohol + NAD(+) = an aldehyde + NADH + H(+). The catalysed reaction is a secondary alcohol + NAD(+) = a ketone + NADH + H(+). It catalyses the reaction S-(hydroxymethyl)glutathione + NADP(+) = S-formylglutathione + NADPH + H(+). It carries out the reaction S-(hydroxymethyl)glutathione + NAD(+) = S-formylglutathione + NADH + H(+). The enzyme catalyses S-nitrosoglutathione + NADH + H(+) = S-(hydroxysulfenamide)glutathione + NAD(+). In terms of biological role, oxidizes long-chain alcohols and, in the presence of glutathione, is able to oxidize formaldehyde. Also acts as a S-nitroso-glutathione reductase by catalyzing the NADH-dependent reduction of S-nitrosoglutathione, thereby regulating protein S-nitrosylation. The polypeptide is S-(hydroxymethyl)glutathione dehydrogenase (flhA) (Paracoccus denitrificans).